The following is a 395-amino-acid chain: S-adenosylmethionine synthase 3 (395 aa).

Residue E10 participates in Mg(2+) binding. ATP is bound at residue H16. K(+) is bound at residue E44. 2 residues coordinate L-methionine: E57 and Q100. ATP is bound by residues 168–170 (DGK), 236–239 (SGRF), D247, 253–254 (RK), A270, K274, and K278. D247 contacts L-methionine. L-methionine is bound at residue K278.

It belongs to the AdoMet synthase family. Homotetramer. Requires Mn(2+) as cofactor. The cofactor is Mg(2+). Co(2+) is required as a cofactor. K(+) serves as cofactor.

The protein localises to the cytoplasm. It catalyses the reaction L-methionine + ATP + H2O = S-adenosyl-L-methionine + phosphate + diphosphate. The protein operates within amino-acid biosynthesis; S-adenosyl-L-methionine biosynthesis; S-adenosyl-L-methionine from L-methionine: step 1/1. Functionally, catalyzes the formation of S-adenosylmethionine from methionine and ATP. The reaction comprises two steps that are both catalyzed by the same enzyme: formation of S-adenosylmethionine (AdoMet) and triphosphate, and subsequent hydrolysis of the triphosphate. In Populus trichocarpa (Western balsam poplar), this protein is S-adenosylmethionine synthase 3 (METK3).